Consider the following 360-residue polypeptide: 3-dehydroquinate synthase (360 aa).

NAD(+) contacts are provided by residues 71-76, 105-109, 129-130, Lys-142, Lys-151, and 169-172; these read DGEQYK, GVVGD, TT, and TLNT. The Zn(2+) site is built by Glu-184, His-248, and His-265.

It belongs to the sugar phosphate cyclases superfamily. Dehydroquinate synthase family. It depends on Co(2+) as a cofactor. Requires Zn(2+) as cofactor. NAD(+) serves as cofactor.

It is found in the cytoplasm. The catalysed reaction is 7-phospho-2-dehydro-3-deoxy-D-arabino-heptonate = 3-dehydroquinate + phosphate. Its pathway is metabolic intermediate biosynthesis; chorismate biosynthesis; chorismate from D-erythrose 4-phosphate and phosphoenolpyruvate: step 2/7. Its function is as follows. Catalyzes the conversion of 3-deoxy-D-arabino-heptulosonate 7-phosphate (DAHP) to dehydroquinate (DHQ). The sequence is that of 3-dehydroquinate synthase from Coxiella burnetii (strain CbuG_Q212) (Coxiella burnetii (strain Q212)).